The chain runs to 1105 residues: Pheromone-regulated membrane protein 10 (1105 aa).

Over residues 1 to 11 the composition is skewed to polar residues; that stretch reads MSDNRPTYDTS. 6 disordered regions span residues 1 to 22, 36 to 55, 65 to 123, 151 to 278, 385 to 473, and 520 to 656; these read MSDNRPTYDTSSSDEEPSNHFH, RKQNHKKHEKPTIAKQTASN, GSNH…FYGD, IKPK…GGGL, AGAS…FLRG, and EQKS…LRHK. A compositionally biased stretch (low complexity) spans 67-82; that stretch reads NHKFGNSINNNNNNAN. Residues 85–106 are compositionally biased toward polar residues; it reads LGSSSAGTNRRSLISPTSSTHV. A compositionally biased stretch (acidic residues) spans 162-178; it reads DSSDDDGNNLDEVEDET. The span at 185-197 shows a compositional bias: polar residues; sequence LNQNHPPQQYYET. The span at 198 to 210 shows a compositional bias: acidic residues; the sequence is DSSDEDEEDDDEV. Polar residues predominate over residues 390-413; the sequence is LDHSQQSSAAPSTEITPSQSPNQH. Low complexity predominate over residues 417-439; the sequence is EKSNNNENNQQSTTVESSSSTSS. A compositionally biased stretch (basic and acidic residues) spans 446–459; that stretch reads LARRRASEERKKAE. 3 stretches are compositionally biased toward polar residues: residues 520-539, 592-606, and 624-633; these read EQKSASSLSRVSTGTSGTAL, RTNTVETQGSSNSEE, and MNANLPSFQN. 10 consecutive transmembrane segments (helical) span residues 782-802, 809-829, 835-855, 860-880, 903-923, 938-958, 963-983, 986-1006, 1015-1035, and 1075-1095; these read PPWLCVLFYGLGSLAVTPFAF, LPISFGVGLCVGYLQFYVSSI, SVFEVSAAIVVAFIARGIGSI, LFCFSAIAQGSLAIILPGYII, VIYSLFLGFGITLGAALYGWI, AIDEKWRILFVPMFALCLGLI, WSQVPIMIVIAGIGYIGSFFA, HFSTVTEFTACIGAFIVGVLG, GMAVSAMLPAIFVQVPSGIAS, and VEVSIGISVGLFAAALIIYPF.

It belongs to the ThrE exporter (TC 2.A.79) family.

It localises to the membrane. The chain is Pheromone-regulated membrane protein 10 (PRM10) from Candida albicans (strain SC5314 / ATCC MYA-2876) (Yeast).